Here is a 427-residue protein sequence, read N- to C-terminus: Enolase (427 aa).

(2R)-2-phosphoglycerate is bound at residue Q163. E205 functions as the Proton donor in the catalytic mechanism. Residues D242, E285, and D312 each coordinate Mg(2+). (2R)-2-phosphoglycerate-binding residues include K337, R366, S367, and K388. Residue K337 is the Proton acceptor of the active site.

Belongs to the enolase family. Mg(2+) serves as cofactor.

Its subcellular location is the cytoplasm. The protein localises to the secreted. It is found in the cell surface. The enzyme catalyses (2R)-2-phosphoglycerate = phosphoenolpyruvate + H2O. The protein operates within carbohydrate degradation; glycolysis; pyruvate from D-glyceraldehyde 3-phosphate: step 4/5. Catalyzes the reversible conversion of 2-phosphoglycerate (2-PG) into phosphoenolpyruvate (PEP). It is essential for the degradation of carbohydrates via glycolysis. The polypeptide is Enolase (Azorhizobium caulinodans (strain ATCC 43989 / DSM 5975 / JCM 20966 / LMG 6465 / NBRC 14845 / NCIMB 13405 / ORS 571)).